A 116-amino-acid polypeptide reads, in one-letter code: Large ribosomal subunit protein bL20 (116 aa).

The protein belongs to the bacterial ribosomal protein bL20 family.

Its function is as follows. Binds directly to 23S ribosomal RNA and is necessary for the in vitro assembly process of the 50S ribosomal subunit. It is not involved in the protein synthesizing functions of that subunit. This Helicobacter pylori (strain HPAG1) protein is Large ribosomal subunit protein bL20.